Here is a 742-residue protein sequence, read N- to C-terminus: Probable serine/threonine-protein kinase PkwA (742 aa).

The Protein kinase domain occupies 16–266 (YRLVSRLGAG…TAELLAQLST (251 aa)). Residues 22-30 (LGAGGMGQV) and K44 each bind ATP. D138 functions as the Proton acceptor in the catalytic mechanism. Residues 266–394 (TDHTGDDWPP…PWSPPRVQPP (129 aa)) are disordered. The segment covering 301–318 (EPPPPSHGPPRPSEPLPD) has biased composition (pro residues). Positions 343–356 (LEEKPIQVIHEPER) are enriched in basic and acidic residues. Pro residues predominate over residues 377 to 392 (PRPAAPQPPWSPPRVQ). 7 WD repeats span residues 455–496 (ILTT…ELHT), 497–538 (LEGH…ERAV), 539–580 (FEGH…EHAV), 581–621 (LKGH…KERD), 622–663 (VLQA…ALHT), 664–705 (FEGH…EHTT), and 706–742 (LEGH…IATE).

The protein belongs to the protein kinase superfamily. Ser/Thr protein kinase family.

It catalyses the reaction L-seryl-[protein] + ATP = O-phospho-L-seryl-[protein] + ADP + H(+). The catalysed reaction is L-threonyl-[protein] + ATP = O-phospho-L-threonyl-[protein] + ADP + H(+). In terms of biological role, may play a regulatory role during the complex growth cycle and in secondary metabolite production. The polypeptide is Probable serine/threonine-protein kinase PkwA (pkwA) (Thermomonospora curvata).